The primary structure comprises 366 residues: Cobalt-precorrin-5B C(1)-methyltransferase (366 aa).

Belongs to the CbiD family.

The enzyme catalyses Co-precorrin-5B + S-adenosyl-L-methionine = Co-precorrin-6A + S-adenosyl-L-homocysteine. It participates in cofactor biosynthesis; adenosylcobalamin biosynthesis; cob(II)yrinate a,c-diamide from sirohydrochlorin (anaerobic route): step 6/10. In terms of biological role, catalyzes the methylation of C-1 in cobalt-precorrin-5B to form cobalt-precorrin-6A. The polypeptide is Cobalt-precorrin-5B C(1)-methyltransferase (Methanococcus maripaludis (strain C7 / ATCC BAA-1331)).